The chain runs to 206 residues: Guanylate kinase (206 aa).

The Guanylate kinase-like domain occupies 6–185; it reads GAILVLSGPS…AAKTLRIIAD (180 aa). 13–20 is an ATP binding site; it reads GPSGAGKS.

It belongs to the guanylate kinase family.

It localises to the cytoplasm. It catalyses the reaction GMP + ATP = GDP + ADP. In terms of biological role, essential for recycling GMP and indirectly, cGMP. The protein is Guanylate kinase of Sulfurimonas denitrificans (strain ATCC 33889 / DSM 1251) (Thiomicrospira denitrificans (strain ATCC 33889 / DSM 1251)).